The chain runs to 109 residues: ATP-dependent Clp protease adapter protein ClpS (109 aa).

A disordered region spans residues 1 to 20; that stretch reads MAERKQGGQGNGVGSSVVTE.

Belongs to the ClpS family. As to quaternary structure, binds to the N-terminal domain of the chaperone ClpA.

Involved in the modulation of the specificity of the ClpAP-mediated ATP-dependent protein degradation. This is ATP-dependent Clp protease adapter protein ClpS from Caulobacter vibrioides (strain NA1000 / CB15N) (Caulobacter crescentus).